The following is a 647-amino-acid chain: Pollen receptor-like kinase 2 (647 aa).

Positions 1–21 (MESKCLMFVSIVSVFFMVVNG) are cleaved as a signal peptide. 5 LRR repeats span residues 87-109 (LNSL…EFKK), 110-134 (LVAL…AFDG), 136-159 (GWLK…LVKS), 161-183 (KLIE…RHHP), and 185-203 (MLNL…SFST). Residues 248–268 (IVAAAVAALAASLIIIGVVIF) traverse the membrane as a helical segment. Positions 338–613 (KASAEILGSG…EAVEKMEDLM (276 aa)) constitute a Protein kinase domain. Phosphoserine is present on S340. ATP-binding positions include 344–352 (LGSGCFGAS) and K366. Position 418 is a phosphoserine (S418). A Phosphothreonine modification is found at T438. Y508 is subject to Phosphotyrosine. Positions 620 to 647 (DDDFYSTYASEADGRSSRGLSSEGINLS) are disordered. Residues 637–647 (RGLSSEGINLS) are compositionally biased toward polar residues.

The protein belongs to the protein kinase superfamily. Ser/Thr protein kinase family. Part of a complex containing ROPGEF1 and ARAC11/ROP1. The interaction between PRK2, ROPGEF1 and ARAC11/ROP1 is phosphorylation-independent. Interacts with ROPGEF12 (via C-terminus). Interacts with ROPGEF1 (via PRONE domain). As to expression, expressed in pollen and/or in flowers, but not in leaves. Expressed in pollen tube.

It is found in the cell membrane. It carries out the reaction L-seryl-[protein] + ATP = O-phospho-L-seryl-[protein] + ADP + H(+). The enzyme catalyses L-threonyl-[protein] + ATP = O-phospho-L-threonyl-[protein] + ADP + H(+). The phosphorylation activity is calcium-independent. Its function is as follows. Receptor-like kinase involved in the control of pollen germination and pollen tube polar growth. Phosphorylates ROPGEF1 in its C-terminal region, releasing its auto-inhibition, and thereby activating the ROP1 signaling pathway. May act as a scaffolding protein, recruiting ROPGEF12 to the plasma membrane by binding to its C-terminal domain. Phosphorylates ROPGEF12, releasing its auto-inhibition. In Arabidopsis thaliana (Mouse-ear cress), this protein is Pollen receptor-like kinase 2.